Here is a 101-residue protein sequence, read N- to C-terminus: CRISPR-associated endoribonuclease Cas2 (101 aa).

Residue Asp-8 coordinates Mg(2+).

It belongs to the CRISPR-associated endoribonuclease Cas2 protein family. In terms of assembly, homodimer, forms a heterotetramer with a Cas1 homodimer. Mg(2+) is required as a cofactor.

In terms of biological role, CRISPR (clustered regularly interspaced short palindromic repeat), is an adaptive immune system that provides protection against mobile genetic elements (viruses, transposable elements and conjugative plasmids). CRISPR clusters contain sequences complementary to antecedent mobile elements and target invading nucleic acids. CRISPR clusters are transcribed and processed into CRISPR RNA (crRNA). Functions as a ssRNA-specific endoribonuclease. Involved in the integration of spacer DNA into the CRISPR cassette. This Ligilactobacillus salivarius (strain UCC118) (Lactobacillus salivarius) protein is CRISPR-associated endoribonuclease Cas2.